The sequence spans 1487 residues: Collagen alpha-1(II) chain (1487 aa).

Residues 1–25 (MIRLGAPQTLVLLTLLVAAVLRCQG) form the signal peptide. Positions 26 to 181 (QDVQEAGSCV…PPGLGGNFAA (156 aa)) are cleaved as a propeptide — N-terminal propeptide. The 59-residue stretch at 32 to 90 (GSCVQDGQRYNDKDVWKPEPCRICVCDTGTVLCDDIICEDVKDCLSPEIPFGECCPICP) folds into the VWFC domain. The disordered stretch occupies residues 97–1237 (SGQPGPKGQK…PREKGPDPLQ (1141 aa)). Basic and acidic residues-rich tracts occupy residues 105-116 (QKGEPGDIKDIV) and 133-154 (PRGD…RDGE). The segment covering 158 to 173 (PGNPGPPGPPGPPGPP) has biased composition (pro residues). At lysine 190 the chain carries 5-hydroxylysine. Lysine 190 is a glycosylation site (O-linked (Gal...) hydroxylysine). The interval 201 to 1214 (GPMGPMGPRG…PGPPGPPGPP (1014 aa)) is triple-helical region. Over residues 208–217 (PRGPPGPAGA) the composition is skewed to pro residues. Residues 218 to 239 (PGPQGFQGNPGEPGEPGVSGPM) are compositionally biased toward low complexity. Over residues 241-250 (PRGPPGPPGK) the composition is skewed to pro residues. A compositionally biased stretch (basic and acidic residues) spans 251–265 (PGDDGEAGKPGKAGE). 5-hydroxylysine is present on residues lysine 287, lysine 299, and lysine 308. O-linked (Gal...) hydroxylysine glycans are attached at residues lysine 287, lysine 299, and lysine 308. Low complexity-rich tracts occupy residues 310 to 320 (ESGSPGENGSP) and 335 to 350 (TGPA…DGQP). Positions 360 to 369 (GPAGGPGFPG) are enriched in gly residues. Low complexity-rich tracts occupy residues 370-382 (APGA…PTGA) and 391-431 (PRGE…AGAP). The residue at position 374 (lysine 374) is a 5-hydroxylysine. Lysine 374 carries an O-linked (Gal...) hydroxylysine glycan. The segment covering 433–442 (FPGPRGPPGP) has biased composition (pro residues). 5-hydroxylysine occurs at positions 608 and 620. Residues lysine 608 and lysine 620 are each glycosylated (O-linked (Gal...) hydroxylysine). Low complexity-rich tracts occupy residues 622-631 (LPGAPGLRGL) and 656-667 (QGAPGPSGFQGL). 2 positions are modified to 4-hydroxyproline: proline 659 and proline 668. 3-hydroxyproline is present on proline 670. Proline 671 and proline 674 each carry 4-hydroxyproline. The span at 764 to 775 (KGDRGDVGEKGP) shows a compositional bias: basic and acidic residues. Composition is skewed to low complexity over residues 833–848 (AGFA…PGAK) and 877–913 (PTGV…SNGN). At proline 907 the chain carries 3-hydroxyproline. 3 positions are modified to 4-hydroxyproline: proline 908, proline 914, and proline 920. Pro residues predominate over residues 1069–1079 (APGPPGSPGPA). Positions 1115–1129 (RGDKGEAGEPGERGL) are enriched in basic and acidic residues. At lysine 1130 the chain carries 5-hydroxylysine. Residue lysine 1130 is glycosylated (O-linked (Gal...) hydroxylysine). Residue proline 1144 is modified to 3-hydroxyproline. Residues 1148 to 1157 (SGDQGASGPA) show a composition bias toward low complexity. Residue proline 1181 is modified to 4-hydroxyproline. Proline 1186 bears the 3-hydroxyproline mark. Proline 1187 carries the post-translational modification 4-hydroxyproline. The span at 1199 to 1216 (AGPPGNPGPPGPPGPPGP) shows a compositional bias: pro residues. Position 1201 is a 3-hydroxyproline (proline 1201). A 4-hydroxyproline mark is found at proline 1202 and proline 1205. Proline 1207 is modified (3-hydroxyproline). Residues proline 1208 and proline 1211 each carry the 4-hydroxyproline modification. Proline 1213 carries the 3-hydroxyproline modification. At proline 1214 the chain carries 4-hydroxyproline. The interval 1215-1241 (GPGIDMSAFAGLGPREKGPDPLQYMRA) is nonhelical region (C-terminal). The Fibrillar collagen NC1 domain occupies 1253 to 1487 (AEVDATLKSL…GVDIGPVCFL (235 aa)). Cystine bridges form between cysteine 1283–cysteine 1315, cysteine 1323–cysteine 1485, and cysteine 1393–cysteine 1438. Residues aspartate 1301, asparagine 1303, glutamine 1304, cysteine 1306, and aspartate 1309 each contribute to the Ca(2+) site. N-linked (GlcNAc...) asparagine glycosylation is present at asparagine 1388.

The protein belongs to the fibrillar collagen family. In terms of assembly, homotrimers of alpha 1(II) chains. Post-translationally, the N-telopeptide is covalently linked to the helical COL2 region of alpha 1(IX), alpha 2(IX) and alpha 3(IX) chain. The C-telopeptide is covalently linked to an another site in the helical region of alpha 3(IX) COL2. Contains mostly 4-hydroxyproline. Prolines at the third position of the tripeptide repeating unit (G-X-P) are 4-hydroxylated in some or all of the chains. In terms of processing, contains 3-hydroxyproline at a few sites. This modification occurs on the first proline residue in the sequence motif Gly-Pro-Hyp, where Hyp is 4-hydroxyproline. Post-translationally, lysine residues at the third position of the tripeptide repeating unit (G-X-Y) are 5-hydroxylated in some or all of the chains. O-glycosylated on hydroxylated lysine residues. The O-linked glycan consists of a Glc-Gal disaccharide. Isoform 2 is highly expressed in juvenile chondrocyte and low in fetal chondrocyte.

The protein resides in the secreted. It localises to the extracellular space. It is found in the extracellular matrix. Functionally, type II collagen is specific for cartilaginous tissues. It is essential for the normal embryonic development of the skeleton, for linear growth and for the ability of cartilage to resist compressive forces. This is Collagen alpha-1(II) chain from Homo sapiens (Human).